A 446-amino-acid polypeptide reads, in one-letter code: MAQKLWEKSVQVNKDIERFTVGRDREMDLYLAKHDVLGSMAHITMLESIGLLTKEELEQLLAELKTIYASVERGEFIIEEGVEDVHSQVELMLTRRLGDVGKKIHSGRSRNDQVLLDLKLFTRTQIREIAEAVEQLFHVLILQSERYKNVLMPGYTHLQIAMPSSFGLWFGAYAESLVDDMQFLQAAFRMCNRNPLGSAAGYGSSFPLNRTMTTDLLGFDSLNYNVVYAQMGRGKLERNVAFALATIAGTISKLAFDACMFNSQNFGFVKLPDDCTTGSSIMPHKKNPDVFELTRAKCNKLQSLPQQIMMIANNLPSGYFRDLQIIKEVFLPAFQELKDCLQMTTYIMNEIKVNEHILDDDKYLFIFSVEEVNRLAREGMPFRDAYKKVGLDIEAGKFTHDKQVHHTHEGSIGNLCNDEISALMQQVVDGFNFCGMEQAEKALLGR.

The protein belongs to the lyase 1 family. Argininosuccinate lyase subfamily.

It is found in the cytoplasm. It catalyses the reaction 2-(N(omega)-L-arginino)succinate = fumarate + L-arginine. It participates in amino-acid biosynthesis; L-arginine biosynthesis; L-arginine from L-ornithine and carbamoyl phosphate: step 3/3. In Bacteroides thetaiotaomicron (strain ATCC 29148 / DSM 2079 / JCM 5827 / CCUG 10774 / NCTC 10582 / VPI-5482 / E50), this protein is Argininosuccinate lyase.